Consider the following 412-residue polypeptide: Putative disintegrin and metalloproteinase domain-containing protein 5 (412 aa).

The 89-residue stretch at 111–199 (EKYADTNILL…YCLPDTYVRD (89 aa)) folds into the Disintegrin domain. Residues 351-385 (NLKLCDASNHCDRHGVCNNFNHCHCEKGYNPPYCQ) form the EGF-like domain.

Interacts with TEX101. In terms of tissue distribution, highly expressed in testis.

In terms of biological role, this is a non catalytic metalloprotease-like protein. This chain is Putative disintegrin and metalloproteinase domain-containing protein 5 (ADAM5), found in Homo sapiens (Human).